The primary structure comprises 271 residues: 2,3,4,5-tetrahydropyridine-2,6-dicarboxylate N-succinyltransferase (271 aa).

The protein belongs to the transferase hexapeptide repeat family.

It is found in the cytoplasm. It carries out the reaction (S)-2,3,4,5-tetrahydrodipicolinate + succinyl-CoA + H2O = (S)-2-succinylamino-6-oxoheptanedioate + CoA. Its pathway is amino-acid biosynthesis; L-lysine biosynthesis via DAP pathway; LL-2,6-diaminopimelate from (S)-tetrahydrodipicolinate (succinylase route): step 1/3. This is 2,3,4,5-tetrahydropyridine-2,6-dicarboxylate N-succinyltransferase from Coxiella burnetii (strain CbuG_Q212) (Coxiella burnetii (strain Q212)).